The sequence spans 289 residues: Protoheme IX farnesyltransferase (289 aa).

A run of 9 helical transmembrane segments spans residues 18–38 (VTSL…EQSP), 40–60 (GFLI…SFIF), 87–107 (VVQA…VLAV), 111–131 (LLTA…YTIF), 139–159 (NIVI…AAIG), 168–188 (SLFM…AIFL), 212–232 (SIFF…FLES), 234–254 (MGFL…ILSY), and 269–289 (FFFS…DHLI).

This sequence belongs to the UbiA prenyltransferase family. Protoheme IX farnesyltransferase subfamily.

It is found in the cell inner membrane. It carries out the reaction heme b + (2E,6E)-farnesyl diphosphate + H2O = Fe(II)-heme o + diphosphate. It participates in porphyrin-containing compound metabolism; heme O biosynthesis; heme O from protoheme: step 1/1. Its function is as follows. Converts heme B (protoheme IX) to heme O by substitution of the vinyl group on carbon 2 of heme B porphyrin ring with a hydroxyethyl farnesyl side group. The chain is Protoheme IX farnesyltransferase from Leptospira interrogans serogroup Icterohaemorrhagiae serovar copenhageni (strain Fiocruz L1-130).